A 270-amino-acid polypeptide reads, in one-letter code: Interleukin-1 alpha (270 aa).

A propeptide spanning residues 1–112 (MAKVPDLFED…EVEEEIMKPR (112 aa)) is cleaved from the precursor. N6-acetyllysine is present on Lys-82. The interval 82–86 (KKRRL) is nuclear localization signal (NLS). The residue at position 87 (Ser-87) is a Phosphoserine. A glycan (N-linked (GlcNAc...) asparagine) is linked at Asn-139.

This sequence belongs to the IL-1 family. Monomer. Interacts with TMED10; the interaction mediates the translocation from the cytoplasm into the ERGIC (endoplasmic reticulum-Golgi intermediate compartment) and thereby secretion. Interacts with IL1R1. Interacts with S100A13; this interaction is the first step in the export of IL1A, followed by direct translocation of this complex across the plasma membrane. Acetylated within its nuclear localization sequence, which impacts subcellular localization. In terms of processing, proteolytic processed by CAPN1 in a calcium-dependent manner. Cleavage from 31 kDa precursor to 18 kDa biologically active molecules. Post-translationally, phosphorylated. Phosphorylation greatly enhances susceptibility to digestion and promotes the conversion of pre-IL1A alpha to the biologically active IL1A.

It is found in the nucleus. The protein localises to the cytoplasm. Its subcellular location is the secreted. Cytokine constitutively present intracellularly in nearly all resting non-hematopoietic cells that plays an important role in inflammation and bridges the innate and adaptive immune systems. After binding to its receptor IL1R1 together with its accessory protein IL1RAP, forms the high affinity interleukin-1 receptor complex. Signaling involves the recruitment of adapter molecules such as MYD88, IRAK1 or IRAK4. In turn, mediates the activation of NF-kappa-B and the three MAPK pathways p38, p42/p44 and JNK pathways. Within the cell, acts as an alarmin and cell death results in its liberation in the extracellular space after disruption of the cell membrane to induce inflammation and alert the host to injury or damage. In addition to its role as a danger signal, which occurs when the cytokine is passively released by cell necrosis, directly senses DNA damage and acts as signal for genotoxic stress without loss of cell integrity. This chain is Interleukin-1 alpha (IL1A), found in Felis catus (Cat).